A 102-amino-acid chain; its full sequence is FGNLSSAQAIMGNPRIRAHGKKVLTSLGLAVQNMDNLKETFAHLSELHCDKLHVDPENFKLLGNVLVIVLSTHFAKEFTPEVQAAWQKLVAGVANALSHKYH.

The Globin domain occupies phenylalanine 1 to histidine 102. Heme b contacts are provided by histidine 19 and histidine 48.

Belongs to the globin family. Heterotetramer of two alpha chains and two beta chains.

In terms of biological role, this is an embryonic beta chain. The sequence is that of Hemoglobin subunit beta-Z (HBBZ) from Mesocricetus auratus (Golden hamster).